Here is a 357-residue protein sequence, read N- to C-terminus: UDP-arabinopyranose mutase 1 (357 aa).

N-acetylvaline is present on Val-2. The short motif at Asp-110–Asp-112 is the DXD motif element. Arg-158 carries an N-linked (Glc...) arginine glycan.

This sequence belongs to the RGP family. As to quaternary structure, heteromers with RGP2, RGP3, RGP4 and RGP5. The cofactor is Mn(2+). Requires Mg(2+) as cofactor. Post-translationally, reversibly glycosylated in vitro by UDP-glucose, UDP-xylose and UDP-galactose, but not UDP-mannose. As to expression, predominantly expressed in shoot and root apical meristems. Expressed in epidermal cells of leaves, inflorescence stems and seed coat. Expressed in pollen.

It is found in the cytoplasm. It localises to the cytosol. The protein resides in the golgi apparatus. It catalyses the reaction UDP-beta-L-arabinofuranose = UDP-beta-L-arabinopyranose. Its function is as follows. UDP-L-arabinose mutase involved in the biosynthesis of cell wall non-cellulosic polysaccharides. Catalyzes the interconvertion of UDP-L-arabinopyranose (UDP-Arap) and UDP-L-arabinofuranose (UDP-Araf) in vitro. Preferentially catalyzes the formation of UDP-Arap from UDP-Araf. At thermodynamic equilibrium in vitro the ratio of the pyranose form over the furanose form is 95:5. Is not active on other UDP-sugars (UDP-Gal, UDP-Xyl, UDP-Glc, GDP-Man and GDP-Fuc). Functions redundantly with RGP2 and is essential for proper cell walls and pollen development. Probably involved in the formation of the pectocellulosic cell wall layer intine. Is probably active as heteromer in vivo. The chain is UDP-arabinopyranose mutase 1 from Arabidopsis thaliana (Mouse-ear cress).